Consider the following 392-residue polypeptide: 6-aminohexanoate-dimer hydrolase (392 aa).

A disordered region spans residues 1-22 (MNARSTGQHPARYPGAAAGEPT). The active site involves S112.

It carries out the reaction [N-(6-aminohexanoyl)](n) + H2O = [N-(6-aminohexanoyl)](n-1) + 6-aminohexanoate. It catalyses the reaction N-(6-aminohexanoyl)-6-aminohexanoate + H2O = 2 6-aminohexanoate. It participates in xenobiotic degradation; nylon-6 oligomer degradation. Functionally, involved in nylon oligomer degradation. The chain is 6-aminohexanoate-dimer hydrolase from Paenarthrobacter ureafaciens.